We begin with the raw amino-acid sequence, 361 residues long: Phospho-N-acetylmuramoyl-pentapeptide-transferase (361 aa).

Transmembrane regions (helical) follow at residues 25 to 45, 73 to 93, 97 to 117, 134 to 154, 168 to 188, 200 to 220, 240 to 260, 264 to 284, 289 to 309, and 338 to 358; these read RAVL…PWVI, TMGG…WADL, YVWL…YDDW, MFWQ…TASL, VIYP…IVGT, GLAA…AYVA, VAVF…FNAY, VFMG…VAVI, IVLF…MIQV, and QVVV…LSTL.

This sequence belongs to the glycosyltransferase 4 family. MraY subfamily. It depends on Mg(2+) as a cofactor.

The protein resides in the cell inner membrane. The enzyme catalyses UDP-N-acetyl-alpha-D-muramoyl-L-alanyl-gamma-D-glutamyl-meso-2,6-diaminopimeloyl-D-alanyl-D-alanine + di-trans,octa-cis-undecaprenyl phosphate = di-trans,octa-cis-undecaprenyl diphospho-N-acetyl-alpha-D-muramoyl-L-alanyl-D-glutamyl-meso-2,6-diaminopimeloyl-D-alanyl-D-alanine + UMP. It functions in the pathway cell wall biogenesis; peptidoglycan biosynthesis. Functionally, catalyzes the initial step of the lipid cycle reactions in the biosynthesis of the cell wall peptidoglycan: transfers peptidoglycan precursor phospho-MurNAc-pentapeptide from UDP-MurNAc-pentapeptide onto the lipid carrier undecaprenyl phosphate, yielding undecaprenyl-pyrophosphoryl-MurNAc-pentapeptide, known as lipid I. The sequence is that of Phospho-N-acetylmuramoyl-pentapeptide-transferase from Laribacter hongkongensis (strain HLHK9).